Reading from the N-terminus, the 251-residue chain is Imidazole glycerol phosphate synthase subunit HisF (251 aa).

Residues aspartate 11 and aspartate 130 contribute to the active site.

The protein belongs to the HisA/HisF family. As to quaternary structure, heterodimer of HisH and HisF.

Its subcellular location is the cytoplasm. It catalyses the reaction 5-[(5-phospho-1-deoxy-D-ribulos-1-ylimino)methylamino]-1-(5-phospho-beta-D-ribosyl)imidazole-4-carboxamide + L-glutamine = D-erythro-1-(imidazol-4-yl)glycerol 3-phosphate + 5-amino-1-(5-phospho-beta-D-ribosyl)imidazole-4-carboxamide + L-glutamate + H(+). It participates in amino-acid biosynthesis; L-histidine biosynthesis; L-histidine from 5-phospho-alpha-D-ribose 1-diphosphate: step 5/9. IGPS catalyzes the conversion of PRFAR and glutamine to IGP, AICAR and glutamate. The HisF subunit catalyzes the cyclization activity that produces IGP and AICAR from PRFAR using the ammonia provided by the HisH subunit. This is Imidazole glycerol phosphate synthase subunit HisF from Chlorobium chlorochromatii (strain CaD3).